Here is a 1801-residue protein sequence, read N- to C-terminus: MASSLAAQLSQIAANSTNQLNLKAQRIAHSHSLIFDKKVAGSQDFDTIYDICFEGFQELCQLDPRFAQFERTIFSPQSKTEERTEMNVAQNKELDTVLEAFLALVGGRLLLSPAVKAADWLIRRFRVHEYNTTATILTFLPYYSTPLFLNLLSILPEDLTPTFKVLLPYKKSLINPPRHPLVHSATTNKPFLAALNAYVIQASRQQSAHHALLSFWAGIFTEAVSGMLDASRSGRRGVEKVKHDDIVLSVLPILNDGLGMKDISELVIGCYMVCVVLAQKAALQDNVLDSLMEAIVASWTVETVSSGLICLSVLAQQKPEPTIPKRVFKAILRLENPIQQLSEISSQYKTSHLLLAIIAGCVDDLSKQEDTVRLDLLSLMFESQILGESETGQGMGIVLRAASSAHKDGVMSLNAQTHLADLVQHFTRSESLQPIFQKTIAESALDVSALEHNLQTVIESAQAPKALEDVEMDEAAPKQQEDEFPSLLQSLESEPLMKSSFLSAQSIPVFDRLAQAFALAIGSQEKLESFANLTVLGKSNATKSPQYLSFFVRVFSGSYPIGTRVTALNMLSSFLSDSPTDIDFQALVPFVLVALGDVSERIRREAAAVLAALGALYKKAKKDNPSVWASDSLYGQAKQSKGVNWLSGRDMSKIFERALLPGLEEYVLDPSHIGRVVEATLRGTLADSDASELKKPLRLALFSFLCSHVVQLPLFAPKLGLLDLLNRVEKAGGTTRTKELEPLLKMWRDLGVEKAKDICDKERISAAEMEAQVVKIVTPKEKDAIVLLLSIINPYSNSLSPSFVAAVFGRMKDIWAKIPEDRQEFAAERLFEVSLQESDSPLVDGCREVLRSVQVPGPVLVRFVKQIPVSVTDIESLGPAPKRRRTSQNNMVAMTVKDEAKLSKLMEKMTFILELVDGSKPEDHPELADGLFQTLAALHHFKSQIQSGMSYLLSLALGSLLAIVNKSRATAKPLFNTSVIRADLVVDCVRTTESPQVQNAALLLVAGLSVIAPELVLHSVMPIFTFMGSSVLRKDDEYSVSVIDQTIDQVVPALIQSLRNQKRDVVSGTSELLLSFTAAFEHIPSHRRLRLFHALITKLGTQDFLFAVLAMLANRYSMDKDVLILMTGLASDATAAVELCTYCKYLELVTDSLRPKPGISQVLLGIGSDDGREPQKVAVDLLRALAYLFRHSSIKSKMAKALAVEGGEESEQIRSYFSQILTQILTIGDTMQEMKAVSQASGEVLSALFGTLSLIDFLDTIEILLQRPGDELRRKVLRLLEGRLRQNPERDSPSQNRMLDFLPTLVTIVESSPDILLKHAAVACIDRITEKYGKKDPSKVIPASKAIAGQSCIGQEDDRIRIMGVLCLASMAEVLGQAMIPALPDALNRSLSLLEVSMEAGKENARLHDAVYSLFSALFVHLPYMISASHLDQILLLSFRSAGSEELEDESRQEALRLMARKADLAATFGVVNRNWTQAVAAGPEATKETLETLSLAIEKHPKSATMKNLPVLTEILFKAFDLRREQVALGSKAKFDADDLEEAEEIVNDVTIKMIYKLNDSTFRPIFTKLFDWATTGISKKDRHGDVSRLTTFYKFLEVFFGTLQSIVTGYASYIIENVVAVLGKASPSNQNTRTLWLSTLRMLRNAFEHDQDEFWQSPSHLNQISEPLISQLAHATTSSLANTVIAEAVPAITELAVAADSTDNHKELNTVLMRFLRPSAGPSGKAAGGENPHTRFAALKAEQSLTEQLGEEWLALLPEMLPYISELMEDEDENVEREVRRWVKQIEDVLGEKLDDMLT.

Residues 582-619 (IDFQALVPFVLVALGDVSERIRREAAAVLAALGALYKK) form an HEAT 1 repeat. The next 2 membrane-spanning stretches (helical) occupy residues 945–965 (IQSG…AIVN) and 1001–1021 (ALLL…HSVM). 4 HEAT repeats span residues 1045 to 1082 (QTID…AFEH), 1252 to 1289 (LSLI…QNPE), 1296 to 1334 (NRML…KYGK), and 1757 to 1794 (ALLP…VLGE).

The protein belongs to the HEATR1/UTP10 family. In terms of assembly, component of the ribosomal small subunit (SSU) processome.

It localises to the nucleus. The protein resides in the nucleolus. It is found in the membrane. In terms of biological role, involved in nucleolar processing of pre-18S ribosomal RNA. Involved in ribosome biosynthesis. In Aspergillus terreus (strain NIH 2624 / FGSC A1156), this protein is U3 small nucleolar RNA-associated protein 10.